Consider the following 230-residue polypeptide: NAD-dependent protein deacylase 1 (230 aa).

Positions Met-1–Glu-226 constitute a Deacetylase sirtuin-type domain. Positions 41 and 44 each coordinate substrate. Position 75 to 78 (Gln-75 to Asp-78) interacts with NAD(+). His-93 functions as the Proton acceptor in the catalytic mechanism. Zn(2+) contacts are provided by Cys-101, Cys-104, Cys-128, and Cys-131. Residues Gly-168 to Ser-170, Asn-194 to Val-196, and Ala-212 each bind NAD(+).

It belongs to the sirtuin family. Class III subfamily. Zn(2+) serves as cofactor.

Its subcellular location is the cytoplasm. The enzyme catalyses N(6)-acetyl-L-lysyl-[protein] + NAD(+) + H2O = 2''-O-acetyl-ADP-D-ribose + nicotinamide + L-lysyl-[protein]. It carries out the reaction N(6)-succinyl-L-lysyl-[protein] + NAD(+) + H2O = 2''-O-succinyl-ADP-D-ribose + nicotinamide + L-lysyl-[protein]. Functionally, NAD-dependent lysine deacetylase and desuccinylase that specifically removes acetyl and succinyl groups on target proteins. Modulates the activities of several proteins which are inactive in their acylated form. The chain is NAD-dependent protein deacylase 1 from Pseudomonas syringae pv. tomato (strain ATCC BAA-871 / DC3000).